Here is a 592-residue protein sequence, read N- to C-terminus: MHKIFIIFGLLSLCAAHSLRDLSNKDEEDPPSSAPGVRKRRMMSEEDQKTVDYYMDKLNKLADEKHPEEIERHKNPELVAWDRKRDSVLNPEEQGKFFQGDIVLYPEQAKALYEQALTEGKTRVKRKFIGSNLRRWDASRPIIYAFDGSHTQREQRIIELALEHWHNITCLNFQRNDQANSGNRIVFTDVDGCASNVGRHPLGEEQLVSLAPECIRLGVIAHEVAHALGFWHEQSRPDRDQYVTVRWENIDKDSKGQFLKEDPDDVDNAGVPYDYGSIMHYRSKAFSKFDDLYTISTYVTDYQKTIGQRDQLSFNDIRLMNKIYCSAVCPSKLPCQRGGYTDPRRCDRCRCPDGFTGQYCEQVMPGYGATCGGKISLTRSTTRISSPGYPREFKEGQECSWLLVAPPGHIVEFQFIGEFEMYCKIRHSLCMDYVEVRNSTDFANTGMRYCCYGTPPTRIRSATTDMVVLFRSFYRGGKGFEARARAVPEAGNWNSWSPWTACSATCGACGSRMRTRTCPPGNACSGEPVETQICNTQACTGMCAQKREEEGQCGGFLSLLRGVRCRQEKTVMAPCENACCPGFTLQRGRCVR.

A signal peptide spans M1–S18. A propeptide spanning residues L19–K127 is cleaved from the precursor. The segment at L22 to E46 is disordered. One can recognise a Peptidase M12A domain in the interval K127 to S326. An N-linked (GlcNAc...) asparagine glycan is attached at N167. Cystine bridges form between C170/C325 and C193/C214. Residue H222 coordinates Zn(2+). E223 is a catalytic residue. Zn(2+) is bound by residues H226 and H232. Residues C349–E361 form the EGF-like domain. C371 and C399 are disulfide-bonded. Positions C371–V487 constitute a CUB domain. Residue N438 is glycosylated (N-linked (GlcNAc...) asparagine). Residues A490 to T540 form the TSP type-1 domain. 3 disulfides stabilise this stretch: C502/C534, C506/C539, and C518/C524.

Requires Zn(2+) as cofactor. Expressed in hypodermis, rectal and vulval epithelial cells and amphid socket cells.

Its subcellular location is the secreted. Its function is as follows. Metalloprotease which cleaves the carboxyl terminus of procollagens, such as sqt-3, to mature collagens. Involved in cuticular collagen maturation. This is Zinc metalloproteinase dpy-31 from Caenorhabditis elegans.